Here is a 322-residue protein sequence, read N- to C-terminus: NADH-cytochrome b5 reductase 2 (322 aa).

The helical transmembrane segment at 31–48 (LAPIYAAVGITGVGVGLY) threads the bilayer. The FAD-binding FR-type domain maps to 72-176 (QGWFDLKLSE…KGPIVKYPWE (105 aa)). 179 to 214 (KHNHICLIAGGTGITPMYQLAREIFKNPEDQTKVTL) lines the FAD pocket.

It belongs to the flavoprotein pyridine nucleotide cytochrome reductase family. Requires FAD as cofactor.

The protein resides in the mitochondrion outer membrane. It carries out the reaction 2 Fe(III)-[cytochrome b5] + NADH = 2 Fe(II)-[cytochrome b5] + NAD(+) + H(+). May mediate the reduction of outer membrane cytochrome b5. The chain is NADH-cytochrome b5 reductase 2 (mcr1) from Aspergillus niger (strain ATCC MYA-4892 / CBS 513.88 / FGSC A1513).